The following is a 351-amino-acid chain: MPYITDMLRDRNSAATPPAEERSEPVPVGAFDARRLSKALSSKIVGQQAAVDAVVRAISIAHVGATDPTRPLANILLVGPTGVGKTELVRRVAAELRSGPDDLCRIDMNALAQEHYAASFSGAPPGYAGSKESFTLFDKNTVEGDPYTPGIVLFDEVEKADPTVLRALLQVLDNGELRLANGQQKISFRNSYVFLTSNLGSAAVAERRRSHLRQLADRVRIDRPRHGHHLVQRALEKFFDPEFFNRIDETVILDEFDDQTAEQVTRLEIELITTRLARRGIDVEVDDSAVALLQRRGFDPVYGARGLRRTIRNVLADPVAGAVLDLRPVGTQPLALQARAVGDQIQVKKAP.

The tract at residues Met1 to Val26 is disordered. Gly79–Thr86 provides a ligand contact to ATP.

The protein belongs to the ClpA/ClpB family.

The polypeptide is ATP-dependent protease ATP-binding subunit-like protein (Rhodococcus erythropolis (Arthrobacter picolinophilus)).